The primary structure comprises 852 residues: DNA double-strand break repair Rad50 ATPase (852 aa).

The ATP site is built by N32, G33, A34, G35, K36, S37, S38, R53, Y54, D59, V61, and R63. Mg(2+) is bound at residue S37. Residue Q142 participates in Mg(2+) binding. Coiled-coil stretches lie at residues E155–D345 and L389–S427. The 100-residue stretch at L389–L488 folds into the Zinc-hook domain. Zn(2+)-binding residues include C435 and C438. 2 coiled-coil regions span residues D460 to L488 and K534 to K711. D797 contacts Mg(2+).

The protein belongs to the SMC family. RAD50 subfamily. Homodimer. Forms a complex with Mre11. It depends on Zn(2+) as a cofactor.

The catalysed reaction is ATP + H2O = ADP + phosphate + H(+). Its function is as follows. Involved in DNA double-strand break repair (DSBR). The Rad50/Mre11 complex possesses single-strand endonuclease activity and ATP-dependent double-strand-specific 3'-5' exonuclease activity. Rad50 provides an ATP-dependent control of Mre11 by positioning DNA ends into the Mre11 active site: ATP-binding induces a large structural change from an open form with accessible Mre11 nuclease sites into a closed form. This is DNA double-strand break repair Rad50 ATPase from Thermotoga maritima (strain ATCC 43589 / DSM 3109 / JCM 10099 / NBRC 100826 / MSB8).